The primary structure comprises 540 residues: Glucose-6-phosphate isomerase (540 aa).

The active-site Proton donor is the Glu350. Catalysis depends on residues His381 and Lys503.

This sequence belongs to the GPI family.

The protein resides in the cytoplasm. It catalyses the reaction alpha-D-glucose 6-phosphate = beta-D-fructose 6-phosphate. Its pathway is carbohydrate biosynthesis; gluconeogenesis. It functions in the pathway carbohydrate degradation; glycolysis; D-glyceraldehyde 3-phosphate and glycerone phosphate from D-glucose: step 2/4. Its function is as follows. Catalyzes the reversible isomerization of glucose-6-phosphate to fructose-6-phosphate. This chain is Glucose-6-phosphate isomerase, found in Burkholderia multivorans (strain ATCC 17616 / 249).